Here is a 345-residue protein sequence, read N- to C-terminus: Ferritin-like-encapsulin shell fusion protein (345 aa).

Residues 1–109 are ferritin-like domain; the sequence is MLSINPTLIN…INDNKKEESN (109 aa). Fe cation-binding residues include Glu-31, Glu-61, and His-64. The encapsulin domain stretch occupies residues 110–345; the sequence is VEYFEKLRSA…KNPEAIVVLE (236 aa).

The protein in the N-terminal section; belongs to the ferritin-like superfamily. This sequence in the C-terminal section; belongs to the encapsulin family. Family 1 subfamily. In terms of assembly, 180 monomers assemble into 12 pentamers and 20 hexamers which further assemble into an icosahedral particle about 36.6 nm in diameter. The N-terminal domain (residues 1-99) crystallizes as 3 decamers.

It localises to the encapsulin nanocompartment. The enzyme catalyses 4 Fe(2+) + O2 + 4 H(+) = 4 Fe(3+) + 2 H2O. Its activity is regulated as follows. The ferroxidase activity is inhibited by zinc. Its function is as follows. Fusion of the shell and cargo protein of a type 1 encapsulin nanocompartment. The nanocompartment is probably involved in iron storage. Expression in E.coli generates spherical particles (PfSPs) about 30 nm in diameter. The purified N-terminus has ferroxidase activity. The sequence is that of Ferritin-like-encapsulin shell fusion protein from Pyrococcus furiosus (strain ATCC 43587 / DSM 3638 / JCM 8422 / Vc1).